Consider the following 477-residue polypeptide: MLIKHTASVQWQLWIVAFGFFMQTLDTTIVNTALPSMAVSLGENPLRMQSVIVSYVLTVAVMLPASGWLADRVGVQRVFFSAIVLFTLGSILCARSETLNELIASRVVQGIGGAMMVPVGRLTVMKIVPREQYMAAMTFVTLPGQIGPLMGPALGGFLVQYASWHWIFLINIPVGIAGAIATLLLMPNYRMQTRRFDISGFILLAVGMATLTLALDGHKGMGLSATAIAGLVVAGVAALAGYWWHAHGNSRALFSLRLFKTRTYKVGLTASLLGRIGSGMLPFMTPLFMQVGMGFSPFHAGLMMIPMIIGSMGMKRIVVRVVNRFGYRNVLVAATLMLALISLSFPLVAMLGWIWLLPVVLFFQGMVNSLRFSAMNTLTLKDLPDRLASSGNSLLSMVMQLSMSLGVSIAGILIGSFAHHQVVTDSPAIHSAFIYSYCCMALIIALPALAFARVPADTTTNRTLTKEPGTGSTRLQQ.

The next 14 helical transmembrane spans lie at 13–33, 50–70, 73–93, 107–127, 139–159, 166–186, 196–216, 220–240, 268–288, 291–311, 326–348, 352–374, 394–414, and 432–452; these read LWIVAFGFFMQTLDTTIVNTA, SVIVSYVLTVAVMLPASGWLA, VGVQRVFFSAIVLFTLGSILC, VVQGIGGAMMVPVGRLTVMKI, FVTLPGQIGPLMGPALGGFLV, WIFLINIPVGIAGAIATLLLM, FDISGFILLAVGMATLTLALD, GMGLSATAIAGLVVAGVAALA, LTASLLGRIGSGMLPFMTPLF, VGMGFSPFHAGLMMIPMIIGS, GYRNVLVAATLMLALISLSFPLV, GWIWLLPVVLFFQGMVNSLRFSA, LLSMVMQLSMSLGVSIAGILI, and AFIYSYCCMALIIALPALAFA.

The protein belongs to the major facilitator superfamily. TCR/Tet family.

The protein resides in the cell inner membrane. This chain is Putative multidrug resistance protein MdtD, found in Serratia proteamaculans (strain 568).